Reading from the N-terminus, the 73-residue chain is Serine rich endogenous peptide 1 (73 aa).

The signal sequence occupies residues 1–28; the sequence is MGMSGSSGLVHVLMLLLLLSILFHHTES. Residues 48-73 form a disordered region; that stretch reads YKPNTAVETPPSRSRRGGGGQNTGAD. An SCOOP motif motif is present at residues 53–67; it reads AVETPPSRSRRGGGG. The short motif at 59–61 is the SxS motif essential for MIK2 binding element; the sequence is SRS. Residues 64-73 show a composition bias toward gly residues; that stretch reads GGGGQNTGAD.

The protein belongs to the serine rich endogenous peptide (SCOOP) phytocytokine family. Interacts with MIK2 (via extracellular leucine-rich repeat domain); this interaction triggers the formation of complex between MIK2 and the BAK1/SERK3 and SERK4 coreceptors, and subsequent BAK1 activation by phosphorylation. Mostly expressed in leaves and flowers, and, to a lower extent, in seedlings shoots.

It localises to the cell membrane. The protein resides in the secreted. It is found in the extracellular space. Its subcellular location is the apoplast. In terms of biological role, brassicaceae-specific phytocytokine (plant endogenous peptide released into the apoplast) perceived by MIK2 in a BAK1/SERK3 and SERK4 coreceptors-dependent manner, that modulates various physiological and antimicrobial processes including growth prevention and reactive oxygen species (ROS) response regulation. The polypeptide is Serine rich endogenous peptide 1 (Arabidopsis thaliana (Mouse-ear cress)).